Consider the following 278-residue polypeptide: Energy-coupling factor transporter ATP-binding protein EcfA1 (278 aa).

In terms of domain architecture, ABC transporter spans 5-239 (LLLESVSYQY…QDKLEAAGID (235 aa)). 39 to 46 (GPNGSGKS) is an ATP binding site.

This sequence belongs to the ABC transporter superfamily. Energy-coupling factor EcfA family. Forms a stable energy-coupling factor (ECF) transporter complex composed of 2 membrane-embedded substrate-binding proteins (S component), 2 ATP-binding proteins (A component) and 2 transmembrane proteins (T component).

The protein localises to the cell membrane. Functionally, ATP-binding (A) component of a common energy-coupling factor (ECF) ABC-transporter complex. Unlike classic ABC transporters this ECF transporter provides the energy necessary to transport a number of different substrates. In Halalkalibacterium halodurans (strain ATCC BAA-125 / DSM 18197 / FERM 7344 / JCM 9153 / C-125) (Bacillus halodurans), this protein is Energy-coupling factor transporter ATP-binding protein EcfA1.